Reading from the N-terminus, the 136-residue chain is Autophagy-related protein 41 (136 aa).

The ATG9-binding stretch occupies residues 127–136; sequence QNYRLWLSSV.

In terms of assembly, interacts with ATG9.

The protein localises to the preautophagosomal structure membrane. Functionally, involved in both selective and non-selective autophagy. Does not appear to play a role in determining the size of autophagosomes, but rather influences their formation rate. With ATG9, plays a role in the delivery of donor membrane to expanding phagophore. This Saccharomyces cerevisiae (strain ATCC 204508 / S288c) (Baker's yeast) protein is Autophagy-related protein 41.